The following is a 325-amino-acid chain: Porphobilinogen deaminase (325 aa).

At Cys-253 the chain carries S-(dipyrrolylmethanemethyl)cysteine.

Belongs to the HMBS family. Requires dipyrromethane as cofactor.

It carries out the reaction 4 porphobilinogen + H2O = hydroxymethylbilane + 4 NH4(+). It participates in porphyrin-containing compound metabolism; protoporphyrin-IX biosynthesis; coproporphyrinogen-III from 5-aminolevulinate: step 2/4. In terms of biological role, tetrapolymerization of the monopyrrole PBG into the hydroxymethylbilane pre-uroporphyrinogen in several discrete steps. The polypeptide is Porphobilinogen deaminase (hemC) (Dictyostelium discoideum (Social amoeba)).